The sequence spans 586 residues: 3-hydroxy-3-methylglutaryl-coenzyme A reductase 3 (586 aa).

Transmembrane regions (helical) follow at residues 36 to 59 and 87 to 107; these read PSDYSLPLSLYLANALVFSLFFSV and ALICLVASVIYLLGFFGIGFV. Residues 108 to 170 are linker; the sequence is HSFSRASTDS…STTTTSTLSD (63 aa). Catalytic stretches follow at residues 171 to 586 and 172 to 586; these read DDEQ…KITF and DEQI…KITF. Active-site charge relay system residues include Glu265, Lys397, and Asp473. His571 functions as the Proton donor in the catalytic mechanism. N-linked (GlcNAc...) asparagine glycosylation occurs at Asn575.

It belongs to the HMG-CoA reductase family.

It is found in the endoplasmic reticulum membrane. The protein resides in the mitochondrion membrane. The protein localises to the plastid membrane. The catalysed reaction is (R)-mevalonate + 2 NADP(+) + CoA = (3S)-3-hydroxy-3-methylglutaryl-CoA + 2 NADPH + 2 H(+). The protein operates within metabolic intermediate biosynthesis; (R)-mevalonate biosynthesis; (R)-mevalonate from acetyl-CoA: step 3/3. Catalyzes the synthesis of mevalonate. The specific precursor of all isoprenoid compounds present in plants. This Hevea brasiliensis (Para rubber tree) protein is 3-hydroxy-3-methylglutaryl-coenzyme A reductase 3 (HMGR3).